A 315-amino-acid polypeptide reads, in one-letter code: tRNA dimethylallyltransferase (315 aa).

Residue 10-17 coordinates ATP; that stretch reads GPTATGKS. Residue 12–17 participates in substrate binding; it reads TATGKS. An interaction with substrate tRNA region spans residues 35–38; the sequence is DSMQ.

The protein belongs to the IPP transferase family. In terms of assembly, monomer. The cofactor is Mg(2+).

The enzyme catalyses adenosine(37) in tRNA + dimethylallyl diphosphate = N(6)-dimethylallyladenosine(37) in tRNA + diphosphate. Its function is as follows. Catalyzes the transfer of a dimethylallyl group onto the adenine at position 37 in tRNAs that read codons beginning with uridine, leading to the formation of N6-(dimethylallyl)adenosine (i(6)A). The chain is tRNA dimethylallyltransferase from Caldanaerobacter subterraneus subsp. tengcongensis (strain DSM 15242 / JCM 11007 / NBRC 100824 / MB4) (Thermoanaerobacter tengcongensis).